We begin with the raw amino-acid sequence, 153 residues long: MKLNELYNNIGAKKNKKRIARGIGSGKGKTGGRGIKGQKSRSGVAIKGFEGGQTPMIKRLPKRGFNCISTKKYNIINIYNIEEALADGRLSADDNITKEKLVEARVVNNKNNKKLVKLLSICSDDFAAPLSLKLDAYSAKAKDLIEKAGGKLL.

A disordered region spans residues 21 to 41 (RGIGSGKGKTGGRGIKGQKSR). Over residues 23-35 (IGSGKGKTGGRGI) the composition is skewed to gly residues.

The protein belongs to the universal ribosomal protein uL15 family. In terms of assembly, part of the 50S ribosomal subunit.

Functionally, binds to the 23S rRNA. This is Large ribosomal subunit protein uL15 from Rickettsia rickettsii (strain Iowa).